The chain runs to 131 residues: NADH dehydrogenase [ubiquinone] 1 alpha subcomplex subunit 6 (131 aa).

The protein belongs to the complex I LYR family. As to quaternary structure, mammalian complex I is composed of 45 different subunits.

The protein resides in the mitochondrion inner membrane. Its function is as follows. Accessory subunit of the mitochondrial membrane respiratory chain NADH dehydrogenase (Complex I), that is believed to be not involved in catalysis. Required for proper complex I assembly. Complex I functions in the transfer of electrons from NADH to the respiratory chain. The immediate electron acceptor for the enzyme is believed to be ubiquinone. The polypeptide is NADH dehydrogenase [ubiquinone] 1 alpha subcomplex subunit 6 (Mus musculus (Mouse)).